The primary structure comprises 230 residues: Cytochrome c oxidase subunit 2 (230 aa).

Over 1–14 (MAHPSQLGFQDAAS) the chain is Mitochondrial intermembrane. A helical transmembrane segment spans residues 15-45 (PVMEELLHFHDHALMIVFLISTLVLYIIVAM). At 46–59 (VSTKLTNKYILDSQ) the chain is on the mitochondrial matrix side. A helical transmembrane segment spans residues 60-87 (EIEIIWTVLPAVILILIALPSLRILYLM). Residues 88–230 (DEINDPHLTI…SWSSLMLEDA (143 aa)) lie on the Mitochondrial intermembrane side of the membrane. 6 residues coordinate Cu cation: His161, Cys196, Glu198, Cys200, His204, and Met207. Glu198 serves as a coordination point for Mg(2+).

The protein belongs to the cytochrome c oxidase subunit 2 family. As to quaternary structure, component of the cytochrome c oxidase (complex IV, CIV), a multisubunit enzyme composed of 14 subunits. The complex is composed of a catalytic core of 3 subunits MT-CO1, MT-CO2 and MT-CO3, encoded in the mitochondrial DNA, and 11 supernumerary subunits COX4I, COX5A, COX5B, COX6A, COX6B, COX6C, COX7A, COX7B, COX7C, COX8 and NDUFA4, which are encoded in the nuclear genome. The complex exists as a monomer or a dimer and forms supercomplexes (SCs) in the inner mitochondrial membrane with NADH-ubiquinone oxidoreductase (complex I, CI) and ubiquinol-cytochrome c oxidoreductase (cytochrome b-c1 complex, complex III, CIII), resulting in different assemblies (supercomplex SCI(1)III(2)IV(1) and megacomplex MCI(2)III(2)IV(2)). Found in a complex with TMEM177, COA6, COX18, COX20, SCO1 and SCO2. Interacts with TMEM177 in a COX20-dependent manner. Interacts with COX20. Interacts with COX16. The cofactor is Cu cation.

The protein localises to the mitochondrion inner membrane. It carries out the reaction 4 Fe(II)-[cytochrome c] + O2 + 8 H(+)(in) = 4 Fe(III)-[cytochrome c] + 2 H2O + 4 H(+)(out). Functionally, component of the cytochrome c oxidase, the last enzyme in the mitochondrial electron transport chain which drives oxidative phosphorylation. The respiratory chain contains 3 multisubunit complexes succinate dehydrogenase (complex II, CII), ubiquinol-cytochrome c oxidoreductase (cytochrome b-c1 complex, complex III, CIII) and cytochrome c oxidase (complex IV, CIV), that cooperate to transfer electrons derived from NADH and succinate to molecular oxygen, creating an electrochemical gradient over the inner membrane that drives transmembrane transport and the ATP synthase. Cytochrome c oxidase is the component of the respiratory chain that catalyzes the reduction of oxygen to water. Electrons originating from reduced cytochrome c in the intermembrane space (IMS) are transferred via the dinuclear copper A center (CU(A)) of subunit 2 and heme A of subunit 1 to the active site in subunit 1, a binuclear center (BNC) formed by heme A3 and copper B (CU(B)). The BNC reduces molecular oxygen to 2 water molecules using 4 electrons from cytochrome c in the IMS and 4 protons from the mitochondrial matrix. This Gadus morhua (Atlantic cod) protein is Cytochrome c oxidase subunit 2 (mt-co2).